A 385-amino-acid chain; its full sequence is MSQSPRIAVVGAGLGGAAAAKLLLQEGFNVRVYEQAPSFSRLGAGIHVGPNVMKILRRIGIEDALNEQGSHPDYWYSRHWQTGDVLAQIPLGDYAVKEYGASYLTVHRGDFHALLVEALPDSVMAYGKFLTKVEDRGNVVVMHFADGTTEEADIVIGPDGVNSRIREELLGPELPKYAGYLAHRAVFPTPEVKAGMLPFDACVKWWSDDRHMMTYFVTGKADELYYVTGVPVEKWDLNDRWLESSKEEMREAFSGWHPTVQALIDATVEVTKWSLLERDPLPLWSRGRLVLLGDACHPMKPHMAQGAAMAIEDGAMLARCLKEVGAHNHELAFALYEANRAERASKVQRISHDNTWLRTNEDPSWCFGYDVFNVPLVEPKVKAAA.

The signal sequence occupies residues 1 to 20 (MSQSPRIAVVGAGLGGAAAA). FAD-binding positions include G15, 34 to 35 (EQ), H47, R108, and L130. The Proton acceptor role is filled by H47. The Proton acceptor role is filled by Y215. Residues D294 and 307-308 (AA) each bind FAD.

The protein belongs to the 6-hydroxynicotinate 3-monooxygenase family. Monomer. FAD serves as cofactor.

It carries out the reaction 6-hydroxynicotinate + NADH + O2 + 2 H(+) = 2,5-dihydroxypyridine + CO2 + NAD(+) + H2O. Its activity is regulated as follows. Inhibited competitively by nicotinic acid with a Ki of 0.49 mM. Inhibited by thiol-specific compounds p-chloromercuribenzoate, DTNB, Ag(2)SO(4), HgCl(2), CuCl(2) and N-ethylmaleimide. No inhibition by o-phenanthroline, 8-hydroxyquinoline, EDTA, disodium 4,5-dihydroxy-m-benzenedisulfonate, fluoride, azide, KCl, LiCl, NaCl, BaCl(2), MnCl(2), MgCl(2), PBCl, ZnCl(2), CoCl(2), SnCl(2), FeSO(4), FeCl(3), NiCl(2), CdCl(2), AlCl(3), iodoacetic acid, hydro-xylamine, phenylhydrazine, semicarbazide, cysteamine, alpha,alpha-dipyridyl and urea. Its function is as follows. Flavin-dependent monooxygenase (FMO) that catalyzes the decarboxylative hydroxylation of 6-hydroxynicotinic acid (6-HNA) to 2,5-dihydroxypyridine (2,5-DHP) with concomitant oxidation of NADH, a step in the aerobic nicotinate degradation pathway. Uses NADH in preference to NADPH as an electron donor. The protein is 6-hydroxynicotinate 3-monooxygenase (nicC) of Pseudomonas fluorescens.